Here is an 87-residue protein sequence, read N- to C-terminus: Small ribosomal subunit protein uS15 (87 aa).

A disordered region spans residues 1–22; that stretch reads MSEINKAEIVASNARAPSDTGS.

It belongs to the universal ribosomal protein uS15 family. As to quaternary structure, part of the 30S ribosomal subunit. Forms a bridge to the 50S subunit in the 70S ribosome, contacting the 23S rRNA.

Functionally, one of the primary rRNA binding proteins, it binds directly to 16S rRNA where it helps nucleate assembly of the platform of the 30S subunit by binding and bridging several RNA helices of the 16S rRNA. Its function is as follows. Forms an intersubunit bridge (bridge B4) with the 23S rRNA of the 50S subunit in the ribosome. The sequence is that of Small ribosomal subunit protein uS15 from Leptothrix cholodnii (strain ATCC 51168 / LMG 8142 / SP-6) (Leptothrix discophora (strain SP-6)).